We begin with the raw amino-acid sequence, 554 residues long: CTP synthase (554 aa).

The tract at residues 1-265 (MTPLIFVTGG…DELVIDQFKL (265 aa)) is amidoligase domain. S13 is a binding site for CTP. UTP is bound at residue S13. Residues 14–19 (SLGKGI) and D71 each bind ATP. Mg(2+) contacts are provided by D71 and E139. Residues 146–148 (DIE), 186–191 (KTKPTQ), and K222 each bind CTP. Residues 186 to 191 (KTKPTQ) and K222 contribute to the UTP site. In terms of domain architecture, Glutamine amidotransferase type-1 spans 292-545 (TIAVVGKYVD…VRAAREKKAG (254 aa)). An L-glutamine-binding site is contributed by G353. The active-site Nucleophile; for glutamine hydrolysis is the C380. Residues 381–384 (YGMQ), E404, and R471 each bind L-glutamine. Catalysis depends on residues H518 and E520.

The protein belongs to the CTP synthase family. As to quaternary structure, homotetramer.

The catalysed reaction is UTP + L-glutamine + ATP + H2O = CTP + L-glutamate + ADP + phosphate + 2 H(+). It catalyses the reaction L-glutamine + H2O = L-glutamate + NH4(+). It carries out the reaction UTP + NH4(+) + ATP = CTP + ADP + phosphate + 2 H(+). It functions in the pathway pyrimidine metabolism; CTP biosynthesis via de novo pathway; CTP from UDP: step 2/2. With respect to regulation, allosterically activated by GTP, when glutamine is the substrate; GTP has no effect on the reaction when ammonia is the substrate. The allosteric effector GTP functions by stabilizing the protein conformation that binds the tetrahedral intermediate(s) formed during glutamine hydrolysis. Inhibited by the product CTP, via allosteric rather than competitive inhibition. Its function is as follows. Catalyzes the ATP-dependent amination of UTP to CTP with either L-glutamine or ammonia as the source of nitrogen. Regulates intracellular CTP levels through interactions with the four ribonucleotide triphosphates. The chain is CTP synthase from Xanthomonas campestris pv. campestris (strain B100).